Consider the following 205-residue polypeptide: CD83 antigen (205 aa).

The N-terminal stretch at 1-19 (MSRGLQLLLLSCAYSLAPA) is a signal peptide. The Ig-like V-type domain occupies 20–114 (TPEVKVACSE…YRCTLQDPDG (95 aa)). The Extracellular segment spans residues 20–144 (TPEVKVACSE…EETFKKYRAE (125 aa)). C35 and C107 are joined by a disulfide. The span at 60-69 (METPQEDHLR) shows a compositional bias: basic and acidic residues. A disordered region spans residues 60 to 81 (METPQEDHLRGQHYHQKGQNGS). N79, N96, and N117 each carry an N-linked (GlcNAc...) asparagine glycan. Residues 145 to 166 (IVLLLALVIFYLTLIIFTCKFA) traverse the membrane as a helical segment. Residues 167–205 (RLQSIFPDFSKAGMERAFLPVTSPNKHLGLVTPHKTELV) are Cytoplasmic-facing.

In terms of assembly, monomer. Homodimer. Homotrimer. Interacts with MARCHF1; this interaction antagonizes MARCHF1-mediated MHC II and CD86 down-regulation. Glycosylated when expressed on activated dendritic cells. As to expression, expressed by activated lymphocytes, Langerhans cells and activatd dendritic cells.

Its subcellular location is the membrane. Transmembrane glycoprotein predominantly found on the surface of many immune cells including dendritic cells or lymphocytes that plays various roles in immune response regulation. Plays an essential role in CD4(+) T-selection, differentiation and stability by regulating the activity of the major E3 ubiquitin ligase responsible for controlling MHCII trafficking MARCHF8. Also inhibits MARCHF1 association with MHCII or CD86 to prevent their ubiquitination and subsequent degradation. In addition, acts as an important modulator of protective responses against acute infections. The polypeptide is CD83 antigen (CD83) (Homo sapiens (Human)).